Consider the following 219-residue polypeptide: Ribose-5-phosphate isomerase A (219 aa).

Residues 28-31, 81-84, and 94-97 each bind substrate; these read TGST, DGAD, and KGGG. The active-site Proton acceptor is E103. Substrate is bound at residue K121.

Belongs to the ribose 5-phosphate isomerase family. In terms of assembly, homodimer.

It carries out the reaction aldehydo-D-ribose 5-phosphate = D-ribulose 5-phosphate. It functions in the pathway carbohydrate degradation; pentose phosphate pathway; D-ribose 5-phosphate from D-ribulose 5-phosphate (non-oxidative stage): step 1/1. Functionally, catalyzes the reversible conversion of ribose-5-phosphate to ribulose 5-phosphate. In Pectobacterium carotovorum subsp. carotovorum (strain PC1), this protein is Ribose-5-phosphate isomerase A.